The following is a 689-amino-acid chain: Protein asunder (689 aa).

Residues 521 to 550 (NGARLKLSKAKDQYRLLYRELEQLIQLNAT) are a coiled coil. 2 disordered regions span residues 591 to 619 (SPER…SKRR) and 665 to 689 (GTKD…SVRS). The segment covering 599–614 (SSVGASGSSNSNSLLK) has biased composition (low complexity). The short motif at 613–619 (LKASKRR) is the Nuclear localization signal (NLS) element.

Belongs to the Integrator subunit 13 family. As to quaternary structure, belongs to the multiprotein complex Integrator, at least composed of IntS1, IntS2, IntS3, IntS4, omd/IntS5, IntS6, defl/IntS7, IntS8, IntS9, IntS10, IntS11, IntS12, asun/IntS13, IntS14 and IntS15. The core complex associates with protein phosphatase 2A subunits mts/PP2A and Pp2A-29B, to form the Integrator-PP2A (INTAC) complex. Post-translationally, phosphorylated.

The protein resides in the nucleus. It localises to the cytoplasm. It is found in the perinuclear region. Functionally, component of the integrator complex, a multiprotein complex that terminates RNA polymerase II (Pol II) transcription in the promoter-proximal region of genes. The integrator complex provides a quality checkpoint during transcription elongation by driving premature transcription termination of transcripts that are unfavorably configured for transcriptional elongation: the complex terminates transcription by (1) catalyzing dephosphorylation of the C-terminal domain (CTD) of Pol II subunit Polr2A/Rbp1 and Spt5, and (2) degrading the exiting nascent RNA transcript via endonuclease activity. The integrator complex is also involved in the 3'-end processing of the U7 snRNA, and also the spliceosomal snRNAs U1, U2, U4 and U5. This is Protein asunder (asun) from Drosophila sechellia (Fruit fly).